We begin with the raw amino-acid sequence, 240 residues long: FMN-dependent NADH:quinone oxidoreductase 2 (240 aa).

FMN contacts are provided by residues S10 and 23–25; that span reads SIS.

This sequence belongs to the azoreductase type 1 family. As to quaternary structure, homodimer. It depends on FMN as a cofactor.

The enzyme catalyses 2 a quinone + NADH + H(+) = 2 a 1,4-benzosemiquinone + NAD(+). The catalysed reaction is N,N-dimethyl-1,4-phenylenediamine + anthranilate + 2 NAD(+) = 2-(4-dimethylaminophenyl)diazenylbenzoate + 2 NADH + 2 H(+). In terms of biological role, quinone reductase that provides resistance to thiol-specific stress caused by electrophilic quinones. Also exhibits azoreductase activity. Catalyzes the reductive cleavage of the azo bond in aromatic azo compounds to the corresponding amines. The polypeptide is FMN-dependent NADH:quinone oxidoreductase 2 (Idiomarina loihiensis (strain ATCC BAA-735 / DSM 15497 / L2-TR)).